The primary structure comprises 54 residues: Potassium channel toxin alpha-KTx 14.2 (54 aa).

Positions 1 to 23 (MKIFFAILLILAVCSMAIWTVNG) are cleaved as a signal peptide. Cystine bridges form between C30–C46, C36–C51, and C40–C53.

Belongs to the short scorpion toxin superfamily. Potassium channel inhibitor family. Alpha-KTx 14 subfamily. In terms of tissue distribution, expressed by the venom gland.

Its subcellular location is the secreted. Its function is as follows. Inhibits potassium channels. May be active towards small conductance calcium-activated potassium channels (KCNN, SK), and less active towards voltage-gated potassium channels (Kv/KCN). This is Potassium channel toxin alpha-KTx 14.2 from Olivierus martensii (Manchurian scorpion).